A 396-amino-acid chain; its full sequence is Digeranylgeranylglycerophospholipid reductase (396 aa).

11 residues coordinate FAD: Gly-14, Glu-33, Cys-44, Gly-45, Gly-47, Arg-100, Ala-124, Glu-162, Asp-283, Gly-295, and Ile-296. A 2,3-bis-O-(geranylgeranyl)-sn-glycerol 1-phospholipid is bound by residues Lys-338 and Val-374.

It belongs to the geranylgeranyl reductase family. DGGGPL reductase subfamily. As to quaternary structure, monomer. The cofactor is FAD.

It localises to the cell membrane. It carries out the reaction 2,3-bis-O-(phytanyl)-sn-glycerol 1-phosphate + 8 NADP(+) = 2,3-bis-O-(geranylgeranyl)-sn-glycerol 1-phosphate + 8 NADPH + 8 H(+). It catalyses the reaction 2,3-bis-O-(phytanyl)-sn-glycerol 1-phosphate + 8 NAD(+) = 2,3-bis-O-(geranylgeranyl)-sn-glycerol 1-phosphate + 8 NADH + 8 H(+). The catalysed reaction is a 2,3-bis-O-phytanyl-sn-glycerol 1-phospholipid + 8 A = a 2,3-bis-O-(geranylgeranyl)-sn-glycerol 1-phospholipid + 8 AH2. The enzyme catalyses CDP-2,3-bis-O-(geranylgeranyl)-sn-glycerol + 8 AH2 = CDP-2,3-bis-O-(phytanyl)-sn-glycerol + 8 A. It carries out the reaction archaetidylserine + 8 AH2 = 2,3-bis-O-phytanyl-sn-glycero-3-phospho-L-serine + 8 A. It participates in membrane lipid metabolism; glycerophospholipid metabolism. In terms of biological role, is involved in the reduction of 2,3-digeranylgeranylglycerophospholipids (unsaturated archaeols) into 2,3-diphytanylglycerophospholipids (saturated archaeols) in the biosynthesis of archaeal membrane lipids. Catalyzes the formation of archaetidic acid (2,3-di-O-phytanyl-sn-glyceryl phosphate) from 2,3-di-O-geranylgeranylglyceryl phosphate (DGGGP) via the hydrogenation of each double bond of the isoprenoid chains. Can use both NADH and NADPH as electron donors. Also catalyzes the reduction of 2,3-di-O-geranylgeranylglyceryl phosphate analogs such as 2,3-di-O-phytyl-sn-glyceryl phosphate (DPHGP), 3-O-(2,3-di-O-phytyl-sn-glycero-phospho)-sn-glycerol (DPHGPG) and 2,3-di-O-phytyl-sn-glycero-phosphoethanolamine (DPHGPE). Is not active toward 2,3-di-O-geranylgeranylglycerol. Is also probably able to reduce double bonds of geranyl groups in CDP-2,3-bis-O-(geranylgeranyl)-sn-glycerol and archaetidylserine, thus acting at various stages in the biosynthesis of archaeal membrane lipids. The sequence is that of Digeranylgeranylglycerophospholipid reductase from Thermoplasma acidophilum (strain ATCC 25905 / DSM 1728 / JCM 9062 / NBRC 15155 / AMRC-C165).